The sequence spans 411 residues: Aspartokinase (411 aa).

7 to 10 lines the ATP pocket; that stretch reads KFGG. 25-30 contacts substrate; the sequence is RVIEEK. S41 is an ATP binding site. Substrate-binding positions include 47–49, E74, 125–126, 150–153, and S153; these read TDE, LN, and RGGS. ATP is bound by residues 173-174 and 179-184; these read TD and FTTDPR. 2 consecutive ACT domains span residues 264-338 and 344-411; these read VTVF…SETG and IVGS…KSER. Substrate-binding positions include 289–291, Q295, 355–356, 369–370, and 376–377; these read NVD, VA, QV, and SE.

The protein belongs to the aspartokinase family. As to quaternary structure, tetramer consisting of 2 isoforms Alpha (catalytic and regulation) and of a homodimer of 2 isoforms Beta (regulation).

The catalysed reaction is L-aspartate + ATP = 4-phospho-L-aspartate + ADP. It participates in amino-acid biosynthesis; L-lysine biosynthesis via DAP pathway; (S)-tetrahydrodipicolinate from L-aspartate: step 1/4. It functions in the pathway amino-acid biosynthesis; L-methionine biosynthesis via de novo pathway; L-homoserine from L-aspartate: step 1/3. The protein operates within amino-acid biosynthesis; L-threonine biosynthesis; L-threonine from L-aspartate: step 1/5. Lysine-sensitive. Functionally, catalyzes the phosphorylation of the beta-carboxyl group of aspartic acid with ATP to yield 4-phospho-L-aspartate, which is involved in the branched biosynthetic pathway leading to the biosynthesis of amino acids threonine, isoleucine and methionine. This chain is Aspartokinase (lysC), found in Bacillus sp. (strain MGA3).